The following is a 298-amino-acid chain: Ankyrin repeat domain-containing protein 29 (298 aa).

ANK repeat units follow at residues 8-38 (PLAN…DVDC), 42-71 (YGTT…DINL), 75-104 (TGST…STEF), 108-137 (DGGT…NVHD), 141-170 (DGAT…KVNQ), 174-203 (DGTA…DRDA), 207-236 (DGST…SLGI), and 239-268 (NGST…DPAL).

The chain is Ankyrin repeat domain-containing protein 29 (ankrd29) from Danio rerio (Zebrafish).